The primary structure comprises 1105 residues: Ran-binding protein 6 (1105 aa).

Residue alanine 2 is modified to N-acetylalanine. HEAT repeat units follow at residues 219 to 257 (FKDF…TVPK), 361 to 399 (KVVL…GCHQ), 402 to 440 (ESIL…DFAP), and 444 to 483 (KKFH…DCPK). The interval 333–383 (DEMEEDDFDSNAVAAESALDRLACGLGGKVVLPMTKEHIMQMLQSPDWKYR) is ran-GTP binding. Residues 806-842 (KAKLEGHFKNQELRQVKRQEENYDQQVEMSLQDEDEC) are a coiled coil. 3 HEAT repeats span residues 866 to 905 (LPWF…HCSP), 908 to 946 (FKYV…FGGD), and 949 to 987 (RSLC…IGKI).

This sequence belongs to the importin beta family.

It is found in the cytoplasm. The protein localises to the nucleus. May function in nuclear protein import as nuclear transport receptor. This Homo sapiens (Human) protein is Ran-binding protein 6 (RANBP6).